The following is a 430-amino-acid chain: Small ribosomal subunit protein uS5m (430 aa).

Residues 218–282 enclose the S5 DRBM domain; that stretch reads FDTRILEVRN…NRAVHHLHYI (65 aa).

This sequence belongs to the universal ribosomal protein uS5 family. Component of the mitochondrial small ribosomal subunit (mt-SSU). Mature mammalian 55S mitochondrial ribosomes consist of a small (28S) and a large (39S) subunit. The 28S small subunit contains a 12S ribosomal RNA (12S mt-rRNA) and 30 different proteins. The 39S large subunit contains a 16S rRNA (16S mt-rRNA), a copy of mitochondrial valine transfer RNA (mt-tRNA(Val)), which plays an integral structural role, and 52 different proteins.

It localises to the mitochondrion. The chain is Small ribosomal subunit protein uS5m (MRPS5) from Homo sapiens (Human).